The sequence spans 216 residues: ATP phosphoribosyltransferase (216 aa).

It belongs to the ATP phosphoribosyltransferase family. Short subfamily. As to quaternary structure, heteromultimer composed of HisG and HisZ subunits.

The protein resides in the cytoplasm. The enzyme catalyses 1-(5-phospho-beta-D-ribosyl)-ATP + diphosphate = 5-phospho-alpha-D-ribose 1-diphosphate + ATP. The protein operates within amino-acid biosynthesis; L-histidine biosynthesis; L-histidine from 5-phospho-alpha-D-ribose 1-diphosphate: step 1/9. Functionally, catalyzes the condensation of ATP and 5-phosphoribose 1-diphosphate to form N'-(5'-phosphoribosyl)-ATP (PR-ATP). Has a crucial role in the pathway because the rate of histidine biosynthesis seems to be controlled primarily by regulation of HisG enzymatic activity. The protein is ATP phosphoribosyltransferase of Thiobacillus denitrificans (strain ATCC 25259 / T1).